Reading from the N-terminus, the 287-residue chain is 4-diphosphocytidyl-2-C-methyl-D-erythritol kinase (287 aa).

Lysine 10 is an active-site residue. Position 94–104 (94–104) interacts with ATP; it reads PVAAGLGGGSA. Residue aspartate 136 is part of the active site.

This sequence belongs to the GHMP kinase family. IspE subfamily.

The enzyme catalyses 4-CDP-2-C-methyl-D-erythritol + ATP = 4-CDP-2-C-methyl-D-erythritol 2-phosphate + ADP + H(+). The protein operates within isoprenoid biosynthesis; isopentenyl diphosphate biosynthesis via DXP pathway; isopentenyl diphosphate from 1-deoxy-D-xylulose 5-phosphate: step 3/6. In terms of biological role, catalyzes the phosphorylation of the position 2 hydroxy group of 4-diphosphocytidyl-2C-methyl-D-erythritol. This Pelotomaculum thermopropionicum (strain DSM 13744 / JCM 10971 / SI) protein is 4-diphosphocytidyl-2-C-methyl-D-erythritol kinase.